The primary structure comprises 179 residues: Enhancer of split m8 protein (179 aa).

The bHLH domain occupies 10–65 (YQKVKKPMLERQRRARMNKCLDNLKTLVAELRGDDGILRMDKAEMLESAVIFMRQQ). Residues 83-116 (FKNGYMNAVNEVSRVMASTPGMSVDLGKSVMTHL) enclose the Orange domain. The disordered stretch occupies residues 146–179 (DKAPLSPASSGYHSDCDSPAPSPQPMQQPLWRPW). The short motif at 176–179 (WRPW) is the WRPW motif element.

As to quaternary structure, homodimer. Heterodimers with dpn. Transcription repression requires formation of a complex with a corepressor protein (Groucho).

Its subcellular location is the nucleus. Its function is as follows. Participates in the control of cell fate choice by uncommitted neuroectodermal cells in the embryo. Transcriptional repressor. Binds DNA on N-box motifs: 5'-CACNAG-3'. Part of the Notch signaling pathway. This Drosophila melanogaster (Fruit fly) protein is Enhancer of split m8 protein.